The primary structure comprises 380 residues: Actin-like protein (380 aa).

The protein belongs to the actin family. ARP1 subfamily.

Its subcellular location is the cytoplasm. It localises to the cytoskeleton. In terms of biological role, involved in nuclear migration. May function as a component of the dynactin complex which activates force generation by cytoplasmic dynein. This chain is Actin-like protein (ro-4), found in Neurospora crassa (strain ATCC 24698 / 74-OR23-1A / CBS 708.71 / DSM 1257 / FGSC 987).